Consider the following 369-residue polypeptide: 4-hydroxy-3-methylbut-2-en-1-yl diphosphate synthase (flavodoxin) (369 aa).

The [4Fe-4S] cluster site is built by Cys-270, Cys-273, Cys-305, and Glu-312.

Belongs to the IspG family. The cofactor is [4Fe-4S] cluster.

The enzyme catalyses (2E)-4-hydroxy-3-methylbut-2-enyl diphosphate + oxidized [flavodoxin] + H2O + 2 H(+) = 2-C-methyl-D-erythritol 2,4-cyclic diphosphate + reduced [flavodoxin]. It participates in isoprenoid biosynthesis; isopentenyl diphosphate biosynthesis via DXP pathway; isopentenyl diphosphate from 1-deoxy-D-xylulose 5-phosphate: step 5/6. Its function is as follows. Converts 2C-methyl-D-erythritol 2,4-cyclodiphosphate (ME-2,4cPP) into 1-hydroxy-2-methyl-2-(E)-butenyl 4-diphosphate. The protein is 4-hydroxy-3-methylbut-2-en-1-yl diphosphate synthase (flavodoxin) of Pseudomonas syringae pv. tomato (strain ATCC BAA-871 / DC3000).